The sequence spans 408 residues: Sex comb on midleg-like protein 4 (408 aa).

Ser55 and Ser65 each carry phosphoserine. The disordered stretch occupies residues 274–338 (AGGPATTTSG…TRRPSSRNPS (65 aa)). The span at 278–287 (ATTTSGSRTN) shows a compositional bias: polar residues. Positions 288–306 (PVPSGGSSSPGLRLPASSP) are enriched in low complexity. The SAM domain occupies 340-406 (WTVEDVVRFV…CYHIDKLKQA (67 aa)).

It belongs to the SCM family.

The protein resides in the nucleus. In terms of biological role, putative Polycomb group (PcG) protein. PcG proteins act by forming multiprotein complexes, which are required to maintain the transcriptionally repressive state of homeotic genes throughout development. The chain is Sex comb on midleg-like protein 4 (Scml4) from Mus musculus (Mouse).